Consider the following 581-residue polypeptide: mRNA-decapping enzyme 1B (581 aa).

Position 145 is a phosphoserine (Ser-145). 2 disordered regions span residues 181–222 (QISS…PEPQ) and 236–258 (APCQEATGPPQTLPLQQQQPEKF). Polar residues predominate over residues 204 to 219 (GSRQQRGPRPGQTSDP). Residues 244–255 (PPQTLPLQQQQP) show a composition bias toward low complexity. Phosphoserine occurs at positions 269 and 326. The interval 349 to 411 (AENRCEPGAP…HQPVTGPGEV (63 aa)) is disordered. Over residues 355–367 (PGAPAPASSATTP) the composition is skewed to low complexity. At Thr-366 the chain carries Phosphothreonine. Over residues 368 to 381 (VSLAQPTRLSSALP) the composition is skewed to polar residues. Over residues 382-401 (PQTPGPRALPRPAPPGPGPG) the composition is skewed to pro residues. Position 412 is a phosphoserine (Ser-412). The disordered stretch occupies residues 427–468 (QQLPAPGRPALAAKFPTATLSTRARNPLEPWRDPPPSTEQPA). Ser-475 carries the post-translational modification Phosphoserine. Residues 498-522 (SWAPPQERSRAPLPPGNQDPAATPT) form a disordered region.

It belongs to the DCP1 family. Interacts with DCP1A.

It localises to the cytoplasm. The protein localises to the nucleus. The enzyme catalyses a 5'-end (N(7)-methyl 5'-triphosphoguanosine)-ribonucleoside in mRNA + H2O = N(7)-methyl-GDP + a 5'-end phospho-ribonucleoside in mRNA + 2 H(+). Its function is as follows. May play a role in the degradation of mRNAs, both in normal mRNA turnover and in nonsense-mediated mRNA decay. May remove the 7-methyl guanine cap structure from mRNA molecules, yielding a 5'-phosphorylated mRNA fragment and 7m-GDP. This chain is mRNA-decapping enzyme 1B (DCP1B), found in Bos taurus (Bovine).